A 105-amino-acid polypeptide reads, in one-letter code: dATP/dGTP diphosphohydrolase (105 aa).

It belongs to the Caudovirales dATP/dGTP diphosphohydrolase family. Requires Co(2+) as cofactor.

It carries out the reaction dGTP + H2O = dGMP + diphosphate + H(+). The enzyme catalyses dATP + H2O = dAMP + diphosphate + H(+). It participates in purine metabolism. Catalyzes the hydrolysis of dGTP into dGMP, which is needed among other for the first step of biosynthesis of dZTP (2-amino-2'-deoxyadenosine-5'-triphosphate). The chain is dATP/dGTP diphosphohydrolase from Cyanophage S-2L (Cyanobacteria phage S-2L).